The sequence spans 81 residues: Small ribosomal subunit protein bS16 (81 aa).

It belongs to the bacterial ribosomal protein bS16 family.

The protein is Small ribosomal subunit protein bS16 of Desulfotalea psychrophila (strain LSv54 / DSM 12343).